The following is a 382-amino-acid chain: Acetylxylan esterase A (382 aa).

The first 21 residues, 1–21, serve as a signal peptide directing secretion; that stretch reads MKSLSFSFLVTLFLYLTLSSA. The propeptide occupies 22-31; sequence RTLGKDVNKR. A catalytic region spans residues 35–307; that stretch reads GSLQQVTGFG…GAKDMEWFGF (273 aa). Residue Asn46 is glycosylated (N-linked (GlcNAc...) asparagine). The active-site Charge relay system is the Ser152. N-linked (GlcNAc...) asparagine glycosylation is present at Asn194. A ser/Thr-rich linker region spans residues 308–345; the sequence is SGSGSSSTTTASATKTSTTSTTSTKTTSSTSSTTTSST. Over residues 313-345 the composition is skewed to low complexity; that stretch reads SSTTTASATKTSTTSTTSTKTTSSTSSTTTSST. Residues 313–346 form a disordered region; that stretch reads SSTTTASATKTSTTSTTSTKTTSSTSSTTTSSTG. The CBM1 domain occupies 346-382; it reads GVAAHWGQCGGSGWTGPTVCESGYTCTYSNAWYSQCL.

Belongs to the carbohydrate esterase 1 (CE1) family. AxeA subfamily. In terms of assembly, monomer. Glycosylated.

It localises to the secreted. The enzyme catalyses Deacetylation of xylans and xylo-oligosaccharides.. Its pathway is glycan degradation; xylan degradation. With respect to regulation, inactivated by phenylmethylsulfonylfluorid (PMSF), a specific inhibitor of serine esterases. Acetylxylan esterase involved in the hydrolysis of xylan, a major structural heterogeneous polysaccharide found in plant biomass representing the second most abundant polysaccharide in the biosphere, after cellulose. Degrades acetylated xylans by cleaving acetyl side groups from the hetero-xylan backbone. The polypeptide is Acetylxylan esterase A (axeA) (Talaromyces purpureogenus (Soft rot fungus)).